A 310-amino-acid chain; its full sequence is Putative olfactory receptor 7A2 (310 aa).

At 1–26 the chain is on the extracellular side; sequence MVKAGNETQISEFLLLGFSEKQELQP. Residue Asn6 is glycosylated (N-linked (GlcNAc...) asparagine). Residues 27–47 form a helical membrane-spanning segment; that stretch reads FLFGLFLSMYLVTVLGNLLII. Residues 48-55 lie on the Cytoplasmic side of the membrane; it reads LAAISDSC. The helical transmembrane segment at 56–76 threads the bilayer; that stretch reads LHTPMYFFLSNLSFVDICFAS. Topologically, residues 77 to 100 are extracellular; sequence TMVPKMLVNIQTQSKVITYAGCIT. Cysteines 98 and 190 form a disulfide. A helical membrane pass occupies residues 101-121; it reads QMCFFVLFIVLDSLLLTVMAY. The Cytoplasmic portion of the chain corresponds to 122–140; sequence DQFVAICHPLHYTVIMSPQ. A helical membrane pass occupies residues 141-161; it reads LCGLLVLVSWIMSVLNSMLQS. The Extracellular segment spans residues 162 to 198; that stretch reads LVTLQLSFCTDLEIPHFFCELNEMIHLACSDTFVNNM. The chain crosses the membrane as a helical span at residues 199-218; sequence VMHFAAVLLDGGPLVGILYS. Topologically, residues 219-238 are cytoplasmic; sequence YCRIVSSIRAISSTQGKYKA. A helical membrane pass occupies residues 239-259; it reads LSTCASHLSVVSIFYGTGLGV. At 260-272 the chain is on the extracellular side; it reads YLSSTMTQNLHST. The chain crosses the membrane as a helical span at residues 273-293; it reads AVASVMYTVVTPMLNPFIYSL. Over 294–310 the chain is Cytoplasmic; it reads RNKDIKGALTQFFRGKQ.

This sequence belongs to the G-protein coupled receptor 1 family.

The protein localises to the cell membrane. In terms of biological role, odorant receptor. This Homo sapiens (Human) protein is Putative olfactory receptor 7A2 (OR7A2P).